The sequence spans 352 residues: tRNA N6-adenosine threonylcarbamoyltransferase (352 aa).

Fe cation contacts are provided by H115 and H119. Substrate contacts are provided by residues 138 to 142 (LVSGG), D171, G184, and N277. Residue D305 participates in Fe cation binding.

This sequence belongs to the KAE1 / TsaD family. Fe(2+) serves as cofactor.

The protein localises to the cytoplasm. It catalyses the reaction L-threonylcarbamoyladenylate + adenosine(37) in tRNA = N(6)-L-threonylcarbamoyladenosine(37) in tRNA + AMP + H(+). Functionally, required for the formation of a threonylcarbamoyl group on adenosine at position 37 (t(6)A37) in tRNAs that read codons beginning with adenine. Is involved in the transfer of the threonylcarbamoyl moiety of threonylcarbamoyl-AMP (TC-AMP) to the N6 group of A37, together with TsaE and TsaB. TsaD likely plays a direct catalytic role in this reaction. This chain is tRNA N6-adenosine threonylcarbamoyltransferase, found in Variovorax paradoxus (strain S110).